Consider the following 329-residue polypeptide: N-acetyl-gamma-glutamyl-phosphate reductase (329 aa).

Cys-155 is a catalytic residue.

This sequence belongs to the NAGSA dehydrogenase family. Type 1 subfamily.

It localises to the cytoplasm. The enzyme catalyses N-acetyl-L-glutamate 5-semialdehyde + phosphate + NADP(+) = N-acetyl-L-glutamyl 5-phosphate + NADPH + H(+). The protein operates within amino-acid biosynthesis; L-arginine biosynthesis; N(2)-acetyl-L-ornithine from L-glutamate: step 3/4. Catalyzes the NADPH-dependent reduction of N-acetyl-5-glutamyl phosphate to yield N-acetyl-L-glutamate 5-semialdehyde. This Shewanella piezotolerans (strain WP3 / JCM 13877) protein is N-acetyl-gamma-glutamyl-phosphate reductase.